The chain runs to 643 residues: tRNA 5-methylaminomethyl-2-thiouridine biosynthesis bifunctional protein MnmC (643 aa).

The tract at residues 1 to 223 (MPDRLVSATL…VDDRLVGDYA (223 aa)) is tRNA (mnm(5)s(2)U34)-methyltransferase. The FAD-dependent cmnm(5)s(2)U34 oxidoreductase stretch occupies residues 247–643 (IGAGLAGCAV…LRARRVGSAG (397 aa)).

It in the N-terminal section; belongs to the methyltransferase superfamily. tRNA (mnm(5)s(2)U34)-methyltransferase family. This sequence in the C-terminal section; belongs to the DAO family. The cofactor is FAD.

The protein resides in the cytoplasm. It catalyses the reaction 5-aminomethyl-2-thiouridine(34) in tRNA + S-adenosyl-L-methionine = 5-methylaminomethyl-2-thiouridine(34) in tRNA + S-adenosyl-L-homocysteine + H(+). In terms of biological role, catalyzes the last two steps in the biosynthesis of 5-methylaminomethyl-2-thiouridine (mnm(5)s(2)U) at the wobble position (U34) in tRNA. Catalyzes the FAD-dependent demodification of cmnm(5)s(2)U34 to nm(5)s(2)U34, followed by the transfer of a methyl group from S-adenosyl-L-methionine to nm(5)s(2)U34, to form mnm(5)s(2)U34. The polypeptide is tRNA 5-methylaminomethyl-2-thiouridine biosynthesis bifunctional protein MnmC (Burkholderia cenocepacia (strain HI2424)).